A 327-amino-acid polypeptide reads, in one-letter code: Phenylalanine--tRNA ligase alpha subunit (327 aa).

A Mg(2+)-binding site is contributed by Glu-252.

Belongs to the class-II aminoacyl-tRNA synthetase family. Phe-tRNA synthetase alpha subunit type 1 subfamily. In terms of assembly, tetramer of two alpha and two beta subunits. Mg(2+) serves as cofactor.

It localises to the cytoplasm. It catalyses the reaction tRNA(Phe) + L-phenylalanine + ATP = L-phenylalanyl-tRNA(Phe) + AMP + diphosphate + H(+). The chain is Phenylalanine--tRNA ligase alpha subunit from Shigella dysenteriae serotype 1 (strain Sd197).